The primary structure comprises 311 residues: 4-diphosphocytidyl-2-C-methyl-D-erythritol kinase (311 aa).

K11 is an active-site residue. Position 94–104 (94–104) interacts with ATP; the sequence is PVAAGLAGGSA. Residue D136 is part of the active site.

Belongs to the GHMP kinase family. IspE subfamily.

It carries out the reaction 4-CDP-2-C-methyl-D-erythritol + ATP = 4-CDP-2-C-methyl-D-erythritol 2-phosphate + ADP + H(+). Its pathway is isoprenoid biosynthesis; isopentenyl diphosphate biosynthesis via DXP pathway; isopentenyl diphosphate from 1-deoxy-D-xylulose 5-phosphate: step 3/6. Its function is as follows. Catalyzes the phosphorylation of the position 2 hydroxy group of 4-diphosphocytidyl-2C-methyl-D-erythritol. The chain is 4-diphosphocytidyl-2-C-methyl-D-erythritol kinase from Synechococcus sp. (strain JA-2-3B'a(2-13)) (Cyanobacteria bacterium Yellowstone B-Prime).